The chain runs to 274 residues: Large ribosomal subunit protein uL2cz/uL2cy (274 aa).

A disordered region spans residues 224–252 (NPVDHPHGGGEGRAPIGRKKPVTPWGYPA).

The protein belongs to the universal ribosomal protein uL2 family. Part of the 50S ribosomal subunit.

The protein resides in the plastid. It localises to the chloroplast. The chain is Large ribosomal subunit protein uL2cz/uL2cy (rpl2-A) from Capsella bursa-pastoris (Shepherd's purse).